The primary structure comprises 151 residues: Deoxyuridine 5'-triphosphate nucleotidohydrolase (151 aa).

Residues 70-72, N83, 87-89, and M97 contribute to the substrate site; these read RSG and LID.

The protein belongs to the dUTPase family. It depends on Mg(2+) as a cofactor.

The catalysed reaction is dUTP + H2O = dUMP + diphosphate + H(+). Its pathway is pyrimidine metabolism; dUMP biosynthesis; dUMP from dCTP (dUTP route): step 2/2. In terms of biological role, this enzyme is involved in nucleotide metabolism: it produces dUMP, the immediate precursor of thymidine nucleotides and it decreases the intracellular concentration of dUTP so that uracil cannot be incorporated into DNA. This chain is Deoxyuridine 5'-triphosphate nucleotidohydrolase, found in Salmonella enteritidis PT4 (strain P125109).